The primary structure comprises 284 residues: Rhomboid-type serine protease 2 (284 aa).

The next 6 membrane-spanning stretches (helical) occupy residues 17-37, 66-86, 98-118, 124-141, 160-180, and 182-202; these read PPAL…IKSV, FHVN…PLAV, VTLN…GLIF, VIGL…MAYH, IKLY…ILFP, and SSLP…YGYI. S128 acts as the Nucleophile in catalysis. The active site involves H187.

It belongs to the peptidase S54 family.

It is found in the golgi apparatus membrane. The protein resides in the golgi apparatus. Its subcellular location is the cis-Golgi network membrane. It catalyses the reaction Cleaves type-1 transmembrane domains using a catalytic dyad composed of serine and histidine that are contributed by different transmembrane domains.. Its function is as follows. Probable rhomboid-type serine protease that catalyzes intramembrane proteolysis. This Candida albicans (strain SC5314 / ATCC MYA-2876) (Yeast) protein is Rhomboid-type serine protease 2 (RBD2).